The primary structure comprises 217 residues: Adenylate kinase (217 aa).

Position 10 to 15 (G10 to T15) interacts with ATP. The tract at residues S30–V59 is NMP. Residues T31, R36, E57–V59, G85–R88, and Q92 each bind AMP. The segment at G126–D163 is LID. R127 serves as a coordination point for ATP. Residues C130 and C133 each contribute to the Zn(2+) site. T136–Y137 serves as a coordination point for ATP. C150 and D153 together coordinate Zn(2+). AMP is bound by residues R160 and R171. Q199 is an ATP binding site.

The protein belongs to the adenylate kinase family. In terms of assembly, monomer.

Its subcellular location is the cytoplasm. It catalyses the reaction AMP + ATP = 2 ADP. Its pathway is purine metabolism; AMP biosynthesis via salvage pathway; AMP from ADP: step 1/1. Its function is as follows. Catalyzes the reversible transfer of the terminal phosphate group between ATP and AMP. Plays an important role in cellular energy homeostasis and in adenine nucleotide metabolism. The chain is Adenylate kinase from Bacillus subtilis (strain 168).